We begin with the raw amino-acid sequence, 451 residues long: Chromosomal replication initiator protein DnaA (451 aa).

The interval 1–94 (MKPDLSSLWQ…KPEPKPAQPS (94 aa)) is domain I, interacts with DnaA modulators. Residues 87–106 (EPKPAQPSALPTHHNKEENK) form a disordered region. Residues 95 to 113 (ALPTHHNKEENKPQTVIRS) are domain II. The interval 114–331 (YLNPKHVFEN…GALNRVSANA (218 aa)) is domain III, AAA+ region. Residues Gly159, Gly161, Lys162, and Thr163 each contribute to the ATP site. The domain IV, binds dsDNA stretch occupies residues 332-451 (EFMGAAITID…WSNLIRTLSV (120 aa)).

It belongs to the DnaA family. In terms of assembly, oligomerizes as a right-handed, spiral filament on DNA at oriC.

The protein resides in the cytoplasm. Its function is as follows. Plays an essential role in the initiation and regulation of chromosomal replication. ATP-DnaA binds to the origin of replication (oriC) to initiate formation of the DNA replication initiation complex once per cell cycle. Binds the DnaA box (a 9 base pair repeat at the origin) and separates the double-stranded (ds)DNA. Forms a right-handed helical filament on oriC DNA; dsDNA binds to the exterior of the filament while single-stranded (ss)DNA is stabiized in the filament's interior. The ATP-DnaA-oriC complex binds and stabilizes one strand of the AT-rich DNA unwinding element (DUE), permitting loading of DNA polymerase. After initiation quickly degrades to an ADP-DnaA complex that is not apt for DNA replication. Binds acidic phospholipids. This is Chromosomal replication initiator protein DnaA from Pasteurella multocida (strain Pm70).